The chain runs to 687 residues: Immune inhibitor A (687 aa).

The span at 1 to 12 shows a compositional bias: basic and acidic residues; sequence MKDAKADTKEKL. The or 32 signal peptide spans 1–25; that stretch reads MKDAKADTKEKLNQPATGTPAATGP. The segment at 1–43 is disordered; sequence MKDAKADTKEKLNQPATGTPAATGPVKGGLNGKVPTSPAKQKA. Residues 26–40 constitute a propeptide that is removed on maturation; sequence VKGGLNGKVPTSPAK. His266 serves as a coordination point for Zn(2+). The active site involves Glu267. A Zn(2+)-binding site is contributed by His270.

The protein belongs to the peptidase M6 family. It depends on Zn(2+) as a cofactor. Ca(2+) is required as a cofactor.

The protein localises to the secreted. Its function is as follows. Neutral metalloprotease that is secreted to degrade antibacterial proteins produced by the insect host for its defense (attacins and cecropins). Probably degrades some unknown crucial protein(s) too, since it is toxic when injected to insect larvae. The polypeptide is Immune inhibitor A (ina) (Bacillus thuringiensis subsp. alesti).